We begin with the raw amino-acid sequence, 85 residues long: uncharacterized protein (85 aa).

Helical transmembrane passes span 16–34 (WALSLSILYVIGWCLCAYL) and 50–71 (LSCIYLPILFIVIGHWIIKIIF).

It to E.coli YhdT.

It is found in the cell membrane. This is an uncharacterized protein from Haemophilus influenzae (strain ATCC 51907 / DSM 11121 / KW20 / Rd).